The primary structure comprises 557 residues: Formate--tetrahydrofolate ligase (557 aa).

65–72 (TPAGEGKT) contributes to the ATP binding site.

Belongs to the formate--tetrahydrofolate ligase family.

It carries out the reaction (6S)-5,6,7,8-tetrahydrofolate + formate + ATP = (6R)-10-formyltetrahydrofolate + ADP + phosphate. It functions in the pathway one-carbon metabolism; tetrahydrofolate interconversion. This is Formate--tetrahydrofolate ligase from Methylococcus capsulatus (strain ATCC 33009 / NCIMB 11132 / Bath).